A 207-amino-acid chain; its full sequence is MLSKKENLLKLDWIKTNGLIPAIIQDFASNLVLMHGYMNKEAFLKTQKEGFVTFYSRTKKRLWTKGEESGNLLKVIDIVTDCDYDTILIIVEPLGKTCHLNRKSCFFLKENTLNFLSKLEDLIEDRKNFNTDNSYTARLYKSGTKRIAQKVGEEAIETILAAMKNDGDELINESSDLIYHLIVLLHDQNLNFNLIIENLKKRKTEKL.

The segment at 1-115 (MLSKKENLLK…FFLKENTLNF (115 aa)) is phosphoribosyl-AMP cyclohydrolase. Residues 116–207 (LSKLEDLIED…NLKKRKTEKL (92 aa)) form a phosphoribosyl-ATP pyrophosphohydrolase region.

The protein in the N-terminal section; belongs to the PRA-CH family. It in the C-terminal section; belongs to the PRA-PH family.

The protein localises to the cytoplasm. It catalyses the reaction 1-(5-phospho-beta-D-ribosyl)-ATP + H2O = 1-(5-phospho-beta-D-ribosyl)-5'-AMP + diphosphate + H(+). The enzyme catalyses 1-(5-phospho-beta-D-ribosyl)-5'-AMP + H2O = 1-(5-phospho-beta-D-ribosyl)-5-[(5-phospho-beta-D-ribosylamino)methylideneamino]imidazole-4-carboxamide. It participates in amino-acid biosynthesis; L-histidine biosynthesis; L-histidine from 5-phospho-alpha-D-ribose 1-diphosphate: step 2/9. The protein operates within amino-acid biosynthesis; L-histidine biosynthesis; L-histidine from 5-phospho-alpha-D-ribose 1-diphosphate: step 3/9. The polypeptide is Histidine biosynthesis bifunctional protein HisIE (hisI) (Buchnera aphidicola subsp. Schizaphis graminum (strain Sg)).